A 148-amino-acid chain; its full sequence is MALYEHVLLARQDISQQQVDALVEQFKGVLEANGGKFGKVENWGLRPLTYRIKKNRKAYYTLVNIDAPAAAVAEMERQMRINEDVLSFLTVRVEEHEEGQSAMLTRRDDRRERDGDDRPRRREGGFDRGDRGDRGPRRPRDNEAGEGA.

A disordered region spans residues 96-148 (HEEGQSAMLTRRDDRRERDGDDRPRRREGGFDRGDRGDRGPRRPRDNEAGEGA).

The protein belongs to the bacterial ribosomal protein bS6 family.

In terms of biological role, binds together with bS18 to 16S ribosomal RNA. This Brucella melitensis biotype 1 (strain ATCC 23456 / CCUG 17765 / NCTC 10094 / 16M) protein is Small ribosomal subunit protein bS6.